A 299-amino-acid polypeptide reads, in one-letter code: Phosphatidylcholine-sterol acyltransferase (299 aa).

N-linked (GlcNAc...) asparagine glycosylation is found at Asn28 and Asn184. A disulfide bond links Cys225 and Cys268. Asp257 functions as the Charge relay system in the catalytic mechanism. Residue Asn285 is glycosylated (N-linked (GlcNAc...) asparagine). His289 functions as the Charge relay system in the catalytic mechanism. Asn296 carries N-linked (GlcNAc...) asparagine glycosylation.

Belongs to the AB hydrolase superfamily. Lipase family.

It localises to the secreted. It carries out the reaction a sterol + a 1,2-diacyl-sn-glycero-3-phosphocholine = a sterol ester + a 1-acyl-sn-glycero-3-phosphocholine. Its activity is regulated as follows. APOA1 is the most potent activator in plasma. Also activated by APOE, APOC1 and APOA4. Functionally, central enzyme in the extracellular metabolism of plasma lipoproteins. Synthesized mainly in the liver and secreted into plasma where it converts cholesterol and phosphatidylcholines (lecithins) to cholesteryl esters and lysophosphatidylcholines on the surface of high and low density lipoproteins (HDLs and LDLs). The cholesterol ester is then transported back to the liver. Has a preference for plasma 16:0-18:2 or 18:O-18:2 phosphatidylcholines. Also produced in the brain by primary astrocytes, and esterifies free cholesterol on nascent APOE-containing lipoproteins secreted from glia and influences cerebral spinal fluid (CSF) APOE- and APOA1 levels. Together with APOE and the cholesterol transporter ABCA1, plays a key role in the maturation of glial-derived, nascent lipoproteins. Required for remodeling high-density lipoprotein particles into their spherical forms. The polypeptide is Phosphatidylcholine-sterol acyltransferase (LCAT) (Micromys minutus (European harvest mouse)).